The chain runs to 244 residues: SURF1-like protein (244 aa).

The next 2 membrane-spanning stretches (helical) occupy residues 7–23 and 201–219; these read ILTT…WQLS and YAIT…YVIY.

It belongs to the SURF1 family.

The protein resides in the cell membrane. The protein is SURF1-like protein of Rickettsia prowazekii (strain Madrid E).